A 267-amino-acid polypeptide reads, in one-letter code: Translation initiation factor 2 subunit alpha (267 aa).

The S1 motif domain maps to 12–83 (GELVVATVKE…RKKQVDVSLK (72 aa)).

Belongs to the eIF-2-alpha family. In terms of assembly, heterotrimer composed of an alpha, a beta and a gamma chain.

Functionally, eIF-2 functions in the early steps of protein synthesis by forming a ternary complex with GTP and initiator tRNA. This Hyperthermus butylicus (strain DSM 5456 / JCM 9403 / PLM1-5) protein is Translation initiation factor 2 subunit alpha.